The sequence spans 170 residues: Small ribosomal subunit protein bS18c (170 aa).

Disordered regions lie at residues 1-60 (MYTS…GPGD) and 149-170 (NRNL…SSDC). 7 repeats span residues 4–10 (SKQPFLK), 11–17 (SKQPFSK), 18–24 (SEQPFSK), 25–31 (SEQPFRK), 32–38 (SKQTFRK), 39–45 (FKQPFRK), and 46–52 (SKQPFRR). Residues 4–52 (SKQPFLKSKQPFSKSEQPFSKSEQPFRKSKQTFRKFKQPFRKSKQPFRR) form a 7 X 7 AA tandem repeats region. A compositionally biased stretch (polar residues) spans 13-26 (QPFSKSEQPFSKSE). The segment covering 30-55 (RKSKQTFRKFKQPFRKSKQPFRRRPR) has biased composition (basic residues).

This sequence belongs to the bacterial ribosomal protein bS18 family. Part of the 30S ribosomal subunit.

Its subcellular location is the plastid. The protein localises to the chloroplast. The protein is Small ribosomal subunit protein bS18c (rps18) of Secale cereale (Rye).